Reading from the N-terminus, the 404-residue chain is Probable tRNA sulfurtransferase (404 aa).

In terms of domain architecture, THUMP spans 61-166; that stretch reads EAVSERLKDV…SGYSYIMCDE (106 aa). ATP-binding positions include 184–185, 209–210, Arg-266, Gly-288, and Gln-297; these read LL and HF.

It belongs to the ThiI family.

Its subcellular location is the cytoplasm. The catalysed reaction is [ThiI sulfur-carrier protein]-S-sulfanyl-L-cysteine + a uridine in tRNA + 2 reduced [2Fe-2S]-[ferredoxin] + ATP + H(+) = [ThiI sulfur-carrier protein]-L-cysteine + a 4-thiouridine in tRNA + 2 oxidized [2Fe-2S]-[ferredoxin] + AMP + diphosphate. It catalyses the reaction [ThiS sulfur-carrier protein]-C-terminal Gly-Gly-AMP + S-sulfanyl-L-cysteinyl-[cysteine desulfurase] + AH2 = [ThiS sulfur-carrier protein]-C-terminal-Gly-aminoethanethioate + L-cysteinyl-[cysteine desulfurase] + A + AMP + 2 H(+). It functions in the pathway cofactor biosynthesis; thiamine diphosphate biosynthesis. Functionally, catalyzes the ATP-dependent transfer of a sulfur to tRNA to produce 4-thiouridine in position 8 of tRNAs, which functions as a near-UV photosensor. Also catalyzes the transfer of sulfur to the sulfur carrier protein ThiS, forming ThiS-thiocarboxylate. This is a step in the synthesis of thiazole, in the thiamine biosynthesis pathway. The sulfur is donated as persulfide by IscS. The sequence is that of Probable tRNA sulfurtransferase from Bacillus cereus (strain ZK / E33L).